The primary structure comprises 216 residues: Ribosomal RNA small subunit methyltransferase G (216 aa).

S-adenosyl-L-methionine contacts are provided by residues G83, M88, 134-135 (VE), and R149.

The protein belongs to the methyltransferase superfamily. RNA methyltransferase RsmG family.

The protein resides in the cytoplasm. The catalysed reaction is guanosine(527) in 16S rRNA + S-adenosyl-L-methionine = N(7)-methylguanosine(527) in 16S rRNA + S-adenosyl-L-homocysteine. In terms of biological role, specifically methylates the N7 position of guanine in position 527 of 16S rRNA. The polypeptide is Ribosomal RNA small subunit methyltransferase G (Pseudomonas entomophila (strain L48)).